Reading from the N-terminus, the 256-residue chain is 1-(5-phosphoribosyl)-5-[(5-phosphoribosylamino)methylideneamino] imidazole-4-carboxamide isomerase (256 aa).

The active-site Proton acceptor is aspartate 8. The Proton donor role is filled by aspartate 129.

It belongs to the HisA/HisF family.

The protein resides in the cytoplasm. The enzyme catalyses 1-(5-phospho-beta-D-ribosyl)-5-[(5-phospho-beta-D-ribosylamino)methylideneamino]imidazole-4-carboxamide = 5-[(5-phospho-1-deoxy-D-ribulos-1-ylimino)methylamino]-1-(5-phospho-beta-D-ribosyl)imidazole-4-carboxamide. It participates in amino-acid biosynthesis; L-histidine biosynthesis; L-histidine from 5-phospho-alpha-D-ribose 1-diphosphate: step 4/9. This chain is 1-(5-phosphoribosyl)-5-[(5-phosphoribosylamino)methylideneamino] imidazole-4-carboxamide isomerase, found in Prochlorococcus marinus (strain NATL2A).